Consider the following 185-residue polypeptide: C-type lectin domain family 5 member A (185 aa).

The Cytoplasmic segment spans residues 1 to 4 (MNWH). The chain crosses the membrane as a helical; Signal-anchor for type II membrane protein span at residues 5 to 27 (MIISGLIVVVLKIVGMTFFLLYF). Residues 28 to 185 (PQIFGEHNVS…YRSICEKSAQ (158 aa)) are Extracellular-facing. 2 N-linked (GlcNAc...) asparagine glycosylation sites follow: N35 and N55. A disulfide bond links C68 and C79. Residues 75–181 (HQGRCFFLST…CDVNYRSICE (107 aa)) enclose the C-type lectin domain. 4 N-linked (GlcNAc...) asparagine glycosylation sites follow: N90, N117, N141, and N146. 2 cysteine pairs are disulfide-bonded: C96–C180 and C158–C172.

Monomer. Homodimer. The majority of CLEC5A is expressed as a monomeric form on macrophages. Interacts with TYROBP/DAP12. The interaction with TYROBP is required for CLEC5 cell surface expression. Interacts with HCST/DAP10. Forms a CLEC5A/TYROBP/HCST trimolecular complex depending almost solely on TYROBP. In terms of processing, N-glycosylated. Contains sialic acid residues. In terms of tissue distribution, constitutively expressed in monocytes and macrophages.

It localises to the cell membrane. Functionally, functions as a positive regulator of osteoclastogenesis. Cell surface receptor that signals via TYROBP. Regulates inflammatory responses. The chain is C-type lectin domain family 5 member A (CLEC5A) from Sus scrofa (Pig).